The following is a 94-amino-acid chain: Large ribosomal subunit protein bL25 (94 aa).

It belongs to the bacterial ribosomal protein bL25 family. Part of the 50S ribosomal subunit; part of the 5S rRNA/L5/L18/L25 subcomplex. Contacts the 5S rRNA. Binds to the 5S rRNA independently of L5 and L18.

Functionally, this is one of the proteins that binds to the 5S RNA in the ribosome where it forms part of the central protuberance. This chain is Large ribosomal subunit protein bL25, found in Edwardsiella ictaluri (strain 93-146).